The following is a 394-amino-acid chain: uncharacterized protein (394 aa).

2 consecutive transmembrane segments (helical) span residues 31-51 (LAIL…LSGL) and 57-77 (LIIA…SLLI).

It belongs to the chlamydial CPn_0129/CT_036/TC_0306 family.

The protein resides in the cell membrane. This is an uncharacterized protein from Chlamydia pneumoniae (Chlamydophila pneumoniae).